Here is an 88-residue protein sequence, read N- to C-terminus: MPNIKSAIKRTKTNNERRAHNATIKSAMRTAIKQVEASVANNEADKAKTALSEAAKRIDKAVKTGLVHKNAAARYKSRLAKQVNGLSA.

The interval 1 to 20 (MPNIKSAIKRTKTNNERRAH) is disordered.

It belongs to the bacterial ribosomal protein bS20 family.

Its function is as follows. Binds directly to 16S ribosomal RNA. This chain is Small ribosomal subunit protein bS20, found in Bacillus velezensis (strain DSM 23117 / BGSC 10A6 / LMG 26770 / FZB42) (Bacillus amyloliquefaciens subsp. plantarum).